A 341-amino-acid chain; its full sequence is MVDAMNQEWWKKASDVVNAFHKEKAAIPSNAQRAREDLKENIAFLRTYLEFNYNLCDKVVFSGSAYEDLNISGDNIEFDVMLIAQRSNFLYLTECNNGVCKIRSNSPFLNYPFDEDFNIDSEKYRSFFFGLIQKWSNMMMTHKKKSFTLVNHGVATQMNVNDEKGILWYQVDLVPCFEAKSSLISEEKFYCVPKPIPNQRLYWRLSYSIDETQIAKKLSNDAKKCIRIIKALFKLETNGLFTKFTSYHIKTSAFYLKERGNWPNEENLGRSIYDFLVFIKESLKNGELKHFFDRTINLLDKIEVSTEQLANTINGWLKNEQKFLTKFSSSIDANIKQLAIK.

ATP-binding positions include Ser-64 and 77–79; that span reads EFD. Glu-77, Asp-79, and Asp-172 together coordinate Mg(2+). GTP is bound at residue Asp-172. ATP is bound by residues Lys-230 and 246-250; that span reads SYHIK. Residue Glu-258 coordinates Mn(2+).

Belongs to the mab-21 family. Requires Mg(2+) as cofactor. It depends on Mn(2+) as a cofactor.

It carries out the reaction GTP + ATP = 2',3'-cGAMP + 2 diphosphate. It catalyses the reaction GTP + ATP = pppGp(2'-5')A + diphosphate. The catalysed reaction is pppGp(2'-5')A = 2',3'-cGAMP + diphosphate. Functionally, nucleotidyltransferase that catalyzes the formation of cyclic GMP-AMP (2',3'-cGAMP) from ATP and GTP and plays a key role in innate immunity. Acts as a key sensor of double-stranded RNA (dsRNA), the presence of dsRNA in the cytoplasm being a danger signal that triggers the immune responses. Directly binds dsRNA, activating the nucleotidyltransferase activity, leading to synthesis of 2',3'-cGAMP, a second messenger that binds to and activates Sting, thereby triggering the immune response via activation of the NF-kappa-B transcription factor. The chain is Cyclic GMP-AMP synthase-like receptor from Hydra vulgaris (Hydra).